The following is a 359-amino-acid chain: 3-dehydroquinate synthase (359 aa).

NAD(+)-binding positions include 71 to 76, 105 to 109, 129 to 130, Lys-142, Lys-151, and 169 to 172; these read DGEAHK, GVIGD, TT, and TLHT. Glu-184, His-247, and His-264 together coordinate Zn(2+).

It belongs to the sugar phosphate cyclases superfamily. Dehydroquinate synthase family. Co(2+) serves as cofactor. It depends on Zn(2+) as a cofactor. NAD(+) is required as a cofactor.

It is found in the cytoplasm. The catalysed reaction is 7-phospho-2-dehydro-3-deoxy-D-arabino-heptonate = 3-dehydroquinate + phosphate. The protein operates within metabolic intermediate biosynthesis; chorismate biosynthesis; chorismate from D-erythrose 4-phosphate and phosphoenolpyruvate: step 2/7. Its function is as follows. Catalyzes the conversion of 3-deoxy-D-arabino-heptulosonate 7-phosphate (DAHP) to dehydroquinate (DHQ). This chain is 3-dehydroquinate synthase, found in Neisseria gonorrhoeae (strain ATCC 700825 / FA 1090).